The primary structure comprises 122 residues: Flagellar protein FliT (122 aa).

The interval 1-50 is required for homodimerization; it reads MTSTVEFINRWQRIALLSQSLLELAQRGEWDLLLQQEVSYLQRIETVMEK. Residues 60-98 form a fliD binding region; the sequence is IQDMVAGYIKQTLDNEQLLKGLLQQRLDELSSLIGQSTR.

It belongs to the FliT family. Homodimer. Interacts with FliD and FlhC.

It is found in the cytoplasm. It localises to the cytosol. Dual-function protein that regulates the transcription of class 2 flagellar operons and that also acts as an export chaperone for the filament-capping protein FliD. As a transcriptional regulator, acts as an anti-FlhDC factor; it directly binds FlhC, thus inhibiting the binding of the FlhC/FlhD complex to class 2 promoters, resulting in decreased expression of class 2 flagellar operons. As a chaperone, effects FliD transition to the membrane by preventing its premature polymerization, and by directing it to the export apparatus. The sequence is that of Flagellar protein FliT from Salmonella paratyphi A (strain AKU_12601).